The sequence spans 87 residues: Small ribosomal subunit protein uS17 (87 aa).

It belongs to the universal ribosomal protein uS17 family. In terms of assembly, part of the 30S ribosomal subunit.

In terms of biological role, one of the primary rRNA binding proteins, it binds specifically to the 5'-end of 16S ribosomal RNA. The chain is Small ribosomal subunit protein uS17 from Geobacillus stearothermophilus (Bacillus stearothermophilus).